Here is a 241-residue protein sequence, read N- to C-terminus: Ribonuclease PH (241 aa).

Phosphate-binding positions include arginine 87 and 125-127 (GTR).

The protein belongs to the RNase PH family. Homohexameric ring arranged as a trimer of dimers.

It carries out the reaction tRNA(n+1) + phosphate = tRNA(n) + a ribonucleoside 5'-diphosphate. Functionally, phosphorolytic 3'-5' exoribonuclease that plays an important role in tRNA 3'-end maturation. Removes nucleotide residues following the 3'-CCA terminus of tRNAs; can also add nucleotides to the ends of RNA molecules by using nucleoside diphosphates as substrates, but this may not be physiologically important. Probably plays a role in initiation of 16S rRNA degradation (leading to ribosome degradation) during starvation. The protein is Ribonuclease PH of Nitrosomonas europaea (strain ATCC 19718 / CIP 103999 / KCTC 2705 / NBRC 14298).